The sequence spans 162 residues: UPF0114 protein Sputw3181_3501 (162 aa).

The next 3 helical transmembrane spans lie at 15 to 35, 53 to 73, and 136 to 156; these read IMAPIYLGLSLVLLGLGIKFF, LVLVTLSLIDITLVGGLIVMV, and IMWYLLIHITFVLSAFAMGYL.

Belongs to the UPF0114 family.

It is found in the cell membrane. The sequence is that of UPF0114 protein Sputw3181_3501 from Shewanella sp. (strain W3-18-1).